We begin with the raw amino-acid sequence, 55 residues long: Large ribosomal subunit protein bL33 (55 aa).

The protein belongs to the bacterial ribosomal protein bL33 family.

This is Large ribosomal subunit protein bL33 from Sinorhizobium medicae (strain WSM419) (Ensifer medicae).